A 927-amino-acid polypeptide reads, in one-letter code: Tubulin monoglycylase TTLL3 (927 aa).

Positions 35–47 (RSQPSELRTNFSS) are enriched in polar residues. 2 disordered regions span residues 35–113 (RSQP…PQPV) and 194–227 (HPPG…EENE). Acidic residues predominate over residues 216-226 (DATEDEDEEEN). The TTL domain maps to 345 to 702 (VLKLVVKLEE…DRRLDRSCDT (358 aa)). ATP is bound by residues Lys-476, 482 to 483 (RG), 514 to 517 (QKYI), 527 to 529 (KFD), and 571 to 572 (CN). Arg-482 is a binding site for a protein. The Mg(2+) site is built by Asp-649, Glu-662, and Asn-664. Residue Glu-662 coordinates ATP. Disordered regions lie at residues 735 to 799 (VPVG…SGKG) and 897 to 927 (EEGH…KTET). A compositionally biased stretch (polar residues) spans 752-769 (LTQQGSGESKDSGSPTHR). The span at 776–788 (ARAESLEHTEKPE) shows a compositional bias: basic and acidic residues. Residues 916–927 (LSSTEPCSKTET) are compositionally biased toward polar residues.

Mg(2+) is required as a cofactor. In terms of tissue distribution, highly expressed in brain and testis. Expressed in heart, kidney, liver, lung, muscle, spleen, trachea and colon. Expressed in sperm flagellum. In the brain, specifically expressed in ependymal cilia.

Its subcellular location is the cytoplasm. It is found in the cytoskeleton. The protein localises to the cell projection. It localises to the cilium. The protein resides in the cilium axoneme. Its subcellular location is the flagellum axoneme. The enzyme catalyses L-glutamyl-[protein] + glycine + ATP = glycyl-L-glutamyl-[protein] + ADP + phosphate + H(+). In terms of biological role, monoglycylase which modifies alpha- and beta-tubulin, adding a single glycine on the gamma-carboxyl groups of specific glutamate residues to generate monoglycine side chains within the C-terminal tail of tubulin. Not involved in elongation step of the polyglycylation reaction. Preferentially glycylates a beta-tail peptide over the alpha-tail, although shifts its preference toward alpha-tail as beta-tail glutamylation increases. Competes with polyglutamylases for modification site on beta-tubulin substrate, thereby creating an anticorrelation between glycylation and glutamylation reactions. Together with TTLL8, mediates microtubule glycylation of primary and motile cilia, which is essential for their stability and maintenance. Involved in microtubule glycylation of primary cilia in colon which controls cell proliferation of epithelial cells and plays an essential role in colon cancer development. Together with TTLL8, glycylates sperm flagella which regulates axonemal dynein motor activity, thereby controlling flagellar beat, directional sperm swimming and male fertility. This Mus musculus (Mouse) protein is Tubulin monoglycylase TTLL3.